Here is a 1763-residue protein sequence, read N- to C-terminus: Genome polyprotein (1763 aa).

The region spanning 458–614 (DGVITSCNKR…ESHKRARPGT (157 aa)) is the SF3 helicase domain. 484–491 (GPPGCGKT) lines the ATP pocket. Tyrosine 984 is modified (O-(5'-phospho-RNA)-tyrosine). Phosphothreonine is present on threonine 1040. Residue serine 1067 is modified to Phosphoserine. The Peptidase C24 domain occupies 1073–1229 (GPGTKFHKNA…KLVVPYVHID (157 aa)). Residues histidine 1110, glutamate 1131, and cysteine 1193 each act as for 3CLpro activity in the active site. Residues 1478-1603 (AKVYAVDYSK…MFPMMFASVS (126 aa)) enclose the RdRp catalytic domain.

In terms of assembly, homodimer. Interacts with NTPase, protein p30 and protease-polymerase p76. As to quaternary structure, interacts with capsid protein VP1 and protease-polymerase p76. Interacts with host IEF4e; this interaction plays a role in translation of viral proteins. Homooligomer. Interacts with Vpg, protein p32 and may interact with capsid protein VP1. Post-translationally, specific enzymatic cleavages in vivo yield mature proteins. Pro-Pol is first autocatalytically cleaved, then processes the whole polyprotein. VPg is uridylylated by the polymerase and is covalently attached to the 5'-end of the polyadenylated genomic and subgenomic RNAs. This uridylylated form acts as a nucleotide-peptide primer for the polymerase.

It is found in the host endoplasmic reticulum membrane. It catalyses the reaction a ribonucleoside 5'-triphosphate + H2O = a ribonucleoside 5'-diphosphate + phosphate + H(+). The catalysed reaction is RNA(n) + a ribonucleoside 5'-triphosphate = RNA(n+1) + diphosphate. It carries out the reaction Endopeptidase with a preference for cleavage when the P1 position is occupied by Glu-|-Xaa and the P1' position is occupied by Gly-|-Yaa.. Together with NTPase and NS4, initiates the formation of the replication complex. Induces the proliferation of the host smooth ER membranes forming long tubular structures. These remodeled membranes probably form the viral factories that contain the replication complex. In terms of biological role, displays NTPase activity, but no helicase activity. Induces the formation of convoluted membranes derived from the host ER. These remodeled membranes probably form the viral factories that contain the replication complex. Together with NS2 and NS4, initiates the formation of the replication complex. Functionally, probable key protein responsible for the formation of membrane alterations by the virus. Induces the formation of convoluted membranes derived from the host ER. These remodeled membranes probably form the viral factories that contain the replication complex. Together with NS2 and NTPase, initiates the formation of the replication complex. Its function is as follows. Viral genome-linked protein is covalently linked to the 5'-end of the positive-strand, negative-strand genomic RNAs and subgenomic RNA. Acts as a genome-linked replication primer. May recruit ribosome to viral RNA thereby promoting viral proteins translation. Interacts with host translation initiation complex to allow the translation of viral proteins. Processes the polyprotein: Pro-Pol is first released by autocleavage, then all other proteins are cleaved. Cleaves host translation initiation factor eIF4G1, eIF4G2 and PABP1 thereby inducing a shutdown of host protein synthesis. This shutdown may not prevent viral mRNA from being translated since viral Vpg replaces the cap. Also functions as an RNA-directed RNA polymerase, which replicates genomic and antigenomic viral RNA by recognizing specific signals. Transcribes a subgenomic mRNA by initiating RNA synthesis internally on antigenomic RNA. This sgRNA codes for structural proteins. Catalyzes the covalent attachment VPg with viral RNAs. Cleaves host G3BP1 thereby preventing the assembly of host stress granules. The protein is Genome polyprotein of Feline calicivirus (strain Cat/United States/Urbana/1960) (FCV).